Here is a 186-residue protein sequence, read N- to C-terminus: MKIAQELRVGNVFMIGSDPMVVQKAEYNKSGRNAAVVKMKYKNLLTEAPGESVFKADDKFEVVVLERRECTYSYFADPMYVFMDTEYNQYEVEKDSMGDSLNYLEDGMVVEVVFYNDKAISVEMPTTLVREIIYTEPAVKGDTSSGKVLKGAKINTGFELQVPLFCNIGDKIEIDTRTGEYRSRAN.

Belongs to the elongation factor P family.

It is found in the cytoplasm. The protein operates within protein biosynthesis; polypeptide chain elongation. In terms of biological role, involved in peptide bond synthesis. Stimulates efficient translation and peptide-bond synthesis on native or reconstituted 70S ribosomes in vitro. Probably functions indirectly by altering the affinity of the ribosome for aminoacyl-tRNA, thus increasing their reactivity as acceptors for peptidyl transferase. This is Elongation factor P from Cupriavidus metallidurans (strain ATCC 43123 / DSM 2839 / NBRC 102507 / CH34) (Ralstonia metallidurans).